Reading from the N-terminus, the 876-residue chain is SED5-binding protein 2 (876 aa).

Residue Ser-51 is modified to Phosphoserine. A zinc finger-like region spans residues 164 to 189 (CRRCRSYMNPFVVFINQGRKWQCNIC). Residues 300–324 (VSDEDDEESDGEEEDEDEEEEDVDN) show a composition bias toward acidic residues. The interval 300 to 326 (VSDEDDEESDGEEEDEDEEEEDVDNSE) is disordered.

This sequence belongs to the SEC23/SEC24 family. SEC24 subfamily. In terms of assembly, COPII is composed of at least five proteins: the SEC23/24 complex, the SEC13/31 complex and SAR1. Interacts with GRH1.

It localises to the cytoplasm. The protein resides in the golgi apparatus membrane. It is found in the endoplasmic reticulum membrane. Functionally, component of the COPII coat, that covers ER-derived vesicles involved in transport from the endoplasmic reticulum to the Golgi apparatus. COPII acts in the cytoplasm to promote the transport of secretory, plasma membrane, and vacuolar proteins from the endoplasmic reticulum to the Golgi complex. The polypeptide is SED5-binding protein 2 (SFB2) (Saccharomyces cerevisiae (strain ATCC 204508 / S288c) (Baker's yeast)).